The primary structure comprises 603 residues: DNA mismatch repair protein MutL (603 aa).

Basic and acidic residues predominate over residues 337 to 347 (ISKKQKEDQKS). The interval 337 to 383 (ISKKQKEDQKSEQIQMSFEENKPVKETPTLFSKPTIPEYVPSDEDAP) is disordered.

It belongs to the DNA mismatch repair MutL/HexB family.

Functionally, this protein is involved in the repair of mismatches in DNA. It is required for dam-dependent methyl-directed DNA mismatch repair. May act as a 'molecular matchmaker', a protein that promotes the formation of a stable complex between two or more DNA-binding proteins in an ATP-dependent manner without itself being part of a final effector complex. The sequence is that of DNA mismatch repair protein MutL from Listeria monocytogenes serotype 4b (strain F2365).